Reading from the N-terminus, the 142-residue chain is MKYLGIDYGTKRTGVAASDTGGSMAFPRRTIVMTTRDRFFAELLAVAEEERAEAYVVGLPLLHDGTDTLTTRQVRNFVERLKRRTTLPVYLMEEFLSSYEAEDDLRDAGLSGRALEAVVDQQAAVRILQSFLNLPESRRTPA.

This sequence belongs to the YqgF nuclease family.

The protein localises to the cytoplasm. Its function is as follows. Could be a nuclease involved in processing of the 5'-end of pre-16S rRNA. The protein is Putative pre-16S rRNA nuclease of Nitratidesulfovibrio vulgaris (strain DSM 19637 / Miyazaki F) (Desulfovibrio vulgaris).